A 437-amino-acid chain; its full sequence is Photosystem II stability/assembly factor HCF136, chloroplastic (437 aa).

It belongs to the Ycf48 family.

It is found in the plastid. Its subcellular location is the chloroplast thylakoid membrane. Essential for photosystem II (PSII) biogenesis; required for assembly of an early intermediate in PSII assembly that includes D2 (psbD) and cytochrome b559. The protein is Photosystem II stability/assembly factor HCF136, chloroplastic of Cyanidioschyzon merolae (strain NIES-3377 / 10D) (Unicellular red alga).